The chain runs to 190 residues: GTP cyclohydrolase 1 (190 aa).

Residues Cys-80, His-83, and Cys-151 each contribute to the Zn(2+) site.

This sequence belongs to the GTP cyclohydrolase I family. In terms of assembly, toroid-shaped homodecamer, composed of two pentamers of five dimers.

The enzyme catalyses GTP + H2O = 7,8-dihydroneopterin 3'-triphosphate + formate + H(+). Its pathway is cofactor biosynthesis; 7,8-dihydroneopterin triphosphate biosynthesis; 7,8-dihydroneopterin triphosphate from GTP: step 1/1. The polypeptide is GTP cyclohydrolase 1 (Rickettsia felis (strain ATCC VR-1525 / URRWXCal2) (Rickettsia azadi)).